We begin with the raw amino-acid sequence, 203 residues long: Chemotactic transduction protein ChpE (203 aa).

The next 5 membrane-spanning stretches (helical) occupy residues 3 to 23 (AIFL…GAVF), 46 to 66 (LIGD…LLGY), 69 to 89 (VRIP…VQGL), 123 to 143 (NVVY…GTPN), and 149 to 169 (VFFA…AALV).

This sequence belongs to the Rht family.

Its subcellular location is the cell membrane. The protein is Chemotactic transduction protein ChpE (chpE) of Pseudomonas aeruginosa (strain ATCC 15692 / DSM 22644 / CIP 104116 / JCM 14847 / LMG 12228 / 1C / PRS 101 / PAO1).